A 68-amino-acid chain; its full sequence is Protein transport protein Sec61 subunit gamma (68 aa).

At 1–32 (MDQFQALIEPARQFSKDSYRLVKRCTKPDRKE) the chain is on the cytoplasmic side. A helical transmembrane segment spans residues 33 to 61 (YQKIAMATAIGFAIMGFIGFFVKLIHIPI). Residues 62-68 (NNIIVGA) are Extracellular-facing.

Belongs to the SecE/SEC61-gamma family. Heterotrimeric complex composed of SEC61-alpha, SEC61-beta and SEC61-gamma. Expressed in the germline. Expression in the germline is regulated in a sex- and meiotic cycle stage-specific manner. Expressed in somatic tissues including the intestine and somatic gonad. Expressed in the intestine more highly in hermaprodites than in males. In hermaphrodites, weakly expressed in the spermatheca.

It is found in the endoplasmic reticulum membrane. Required for oocyte development and ovulation. Required for the translocation of secretory and transmembrane proteins into the endoplasmic reticulum in vitro. The sequence is that of Protein transport protein Sec61 subunit gamma from Caenorhabditis elegans.